The sequence spans 475 residues: tRNA-2-methylthio-N(6)-dimethylallyladenosine synthase (475 aa).

The 118-residue stretch at 2-119 folds into the MTTase N-terminal domain; it reads AKLHITTWGC…LPEMINQIRS (118 aa). Cysteine 11, cysteine 48, cysteine 82, cysteine 156, cysteine 160, and cysteine 163 together coordinate [4Fe-4S] cluster. A Radical SAM core domain is found at 142 to 374; the sequence is KAEGPTAFVS…QQRINHQAMQ (233 aa). A TRAM domain is found at 377 to 440; sequence RLMLGTEQRI…SNSLRGEVIR (64 aa).

Belongs to the methylthiotransferase family. MiaB subfamily. As to quaternary structure, monomer. The cofactor is [4Fe-4S] cluster.

The protein localises to the cytoplasm. It catalyses the reaction N(6)-dimethylallyladenosine(37) in tRNA + (sulfur carrier)-SH + AH2 + 2 S-adenosyl-L-methionine = 2-methylsulfanyl-N(6)-dimethylallyladenosine(37) in tRNA + (sulfur carrier)-H + 5'-deoxyadenosine + L-methionine + A + S-adenosyl-L-homocysteine + 2 H(+). In terms of biological role, catalyzes the methylthiolation of N6-(dimethylallyl)adenosine (i(6)A), leading to the formation of 2-methylthio-N6-(dimethylallyl)adenosine (ms(2)i(6)A) at position 37 in tRNAs that read codons beginning with uridine. The polypeptide is tRNA-2-methylthio-N(6)-dimethylallyladenosine synthase (Haemophilus ducreyi (strain 35000HP / ATCC 700724)).